A 261-amino-acid polypeptide reads, in one-letter code: Proliferating cell nuclear antigen (261 aa).

Lys-14, Lys-77, and Lys-80 each carry N6-acetyllysine. The DNA-binding element occupies 61 to 80; sequence RCDRNLAMGVNLTSMSKILK. A disulfide bridge links Cys-135 with Cys-162. A Glycyl lysine isopeptide (Lys-Gly) (interchain with G-Cter in SUMO2); alternate cross-link involves residue Lys-164. Lys-164 participates in a covalent cross-link: Glycyl lysine isopeptide (Lys-Gly) (interchain with G-Cter in ubiquitin); alternate. At Tyr-211 the chain carries Phosphotyrosine; by EGFR. Lys-248 bears the N6-acetyllysine mark. Lys-254 is covalently cross-linked (Glycyl lysine isopeptide (Lys-Gly) (interchain with G-Cter in SUMO2)).

This sequence belongs to the PCNA family. In terms of assembly, homotrimer. Interacts with p300/EP300; the interaction occurs on chromatin in UV-irradiated damaged cells. Interacts with CREBBP (via transactivation domain and C-terminus); the interaction occurs on chromatin in UV-irradiated damaged cells. Directly interacts with POLD1, POLD3 and POLD4 subunits of the DNA polymerase delta complex, POLD3 being the major interacting partner; the interaction with POLD3 is inhibited by CDKN1A/p21(CIP1). Forms a complex with activator 1 heteropentamer in the presence of ATP. Interacts with EXO1, POLH, POLK, DNMT1, ERCC5, FEN1, CDC6 and POLDIP2. Interacts with POLB. Interacts with APEX2; this interaction is triggered by reactive oxygen species and increased by misincorporation of uracil in nuclear DNA. Forms a ternary complex with DNTTIP2 and core histone. Interacts with KCTD10. Interacts with PPP1R15A. Interacts with SMARCA5/SNF2H. Interacts with BAZ1B/WSTF; the interaction is direct and is required for BAZ1B/WSTF binding to replication foci during S phase. Interacts with HLTF and SHPRH. Interacts with NUDT15; this interaction is disrupted in response to UV irradiation and acetylation. Interacts with CDKN1A/p21(CIP1) and CDT1; interacts via their PIP-box which also recruits the DCX(DTL) complex. The interaction with CDKN1A inhibits POLD3 binding. Interacts with DDX11. Interacts with EGFR; positively regulates PCNA. Interacts with PARPBP. Interacts (when ubiquitinated) with SPRTN; leading to enhance RAD18-mediated PCNA ubiquitination. Interacts (when polyubiquitinated) with ZRANB3. Interacts with SMARCAD1. Interacts with CDKN1C. Interacts with PCLAF (via PIP-box). Interacts with RTEL1 (via PIP-box); the interaction is direct and essential for the suppression of telomere fragility. Interacts with FAM111A (via PIP-box); the interaction is direct and required for PCNA loading on chromatin binding. Interacts with LIG1. Interacts with SETMAR. Interacts with ANKRD17. Interacts with FBXO18/FBH1 (via PIP-box); the interaction recruits the DCX(DTL) complex and promotes ubiquitination and degradation of FBXO18/FBH1. Interacts with POLN. Interacts with SDE2 (via PIP-box); the interaction is direct and prevents ultraviolet light induced monoubiquitination. Component of the replisome complex composed of at least DONSON, MCM2, MCM7, PCNA and TICRR; interaction at least with PCNA occurs during DNA replication. Interacts with MAPK15; the interaction is chromatin binding dependent and prevents MDM2-mediated PCNA destruction by inhibiting the association of PCNA with MDM2. Interacts with PARP10 (via PIP-box). Interacts with DDI2. Interacts with HMCES (via PIP-box). Interacts with TRAIP (via PIP-box). Interacts with UHRF2. Interacts with ALKBH2; this interaction is enhanced during the S-phase of the cell cycle. Interacts with ATAD5; the interaction promotes USP1-mediated PCNA deubiquitination. Interacts (when phosphorylated) with GRB2. Interacts with ANG. Interacts with nuclear UNG; this interaction mediates UNG recruitment to S-phase replication foci. Interacts with ERCC6L2 (via an atypical PIP-box); this interaction facilitates cenrtomeric localization of ERCC6L2. Phosphorylated. Phosphorylation at Tyr-211 by EGFR stabilizes chromatin-associated PCNA. Post-translationally, acetylated by CREBBP and p300/EP300; preferentially acetylated by CREBBP on Lys-80, Lys-13 and Lys-14 and on Lys-77 by p300/EP300 upon loading on chromatin in response to UV irradiation. Lysine acetylation disrupts association with chromatin, hence promoting PCNA ubiquitination and proteasomal degradation in response to UV damage in a CREBBP- and EP300-dependent manner. Acetylation disrupts interaction with NUDT15 and promotes degradation. In terms of processing, ubiquitinated. Following DNA damage, can be either monoubiquitinated to stimulate direct bypass of DNA lesions by specialized DNA polymerases or polyubiquitinated to promote recombination-dependent DNA synthesis across DNA lesions by template switching mechanisms. Following induction of replication stress, monoubiquitinated by the UBE2B-RAD18 complex on Lys-164, leading to recruit translesion (TLS) polymerases, which are able to synthesize across DNA lesions in a potentially error-prone manner. An error-free pathway also exists and requires non-canonical polyubiquitination on Lys-164 through 'Lys-63' linkage of ubiquitin moieties by the E2 complex UBE2N-UBE2V2 and the E3 ligases, HLTF, RNF8 and SHPRH. This error-free pathway, also known as template switching, employs recombination mechanisms to synthesize across the lesion, using as a template the undamaged, newly synthesized strand of the sister chromatid. Monoubiquitination at Lys-164 also takes place in undamaged proliferating cells, and is mediated by the DCX(DTL) complex, leading to enhance PCNA-dependent translesion DNA synthesis. Sumoylated during S phase. Methylated on glutamate residues by ARMT1.

Its subcellular location is the nucleus. Auxiliary protein of DNA polymerase delta and epsilon, is involved in the control of eukaryotic DNA replication by increasing the polymerase's processibility during elongation of the leading strand. Induces a robust stimulatory effect on the 3'-5' exonuclease and 3'-phosphodiesterase, but not apurinic-apyrimidinic (AP) endonuclease, APEX2 activities. Has to be loaded onto DNA in order to be able to stimulate APEX2. Plays a key role in DNA damage response (DDR) by being conveniently positioned at the replication fork to coordinate DNA replication with DNA repair and DNA damage tolerance pathways. Acts as a loading platform to recruit DDR proteins that allow completion of DNA replication after DNA damage and promote postreplication repair: Monoubiquitinated PCNA leads to recruitment of translesion (TLS) polymerases, while 'Lys-63'-linked polyubiquitination of PCNA is involved in error-free pathway and employs recombination mechanisms to synthesize across the lesion. The chain is Proliferating cell nuclear antigen (Pcna) from Mus musculus (Mouse).